Here is a 116-residue protein sequence, read N- to C-terminus: T cell receptor alpha variable 38-2/delta variable 8 (116 aa).

A signal peptide spans 1-21 (MACPGFLWALVISTCLEFSMA). The 95-residue stretch at 22–116 (QTVTQSQPEM…AAMYFCAYRS (95 aa)) folds into the Ig-like domain. The cysteines at positions 43 and 112 are disulfide-linked. Asparagine 78 is a glycosylation site (N-linked (GlcNAc...) asparagine).

In terms of assembly, alpha-beta TR is a heterodimer composed of an alpha and beta chain; disulfide-linked. The alpha-beta TR is associated with the transmembrane signaling CD3 coreceptor proteins to form the TR-CD3 (TcR or TCR). The assembly of alpha-beta TR heterodimers with CD3 occurs in the endoplasmic reticulum where a single alpha-beta TR heterodimer associates with one CD3D-CD3E heterodimer, one CD3G-CD3E heterodimer and one CD247 homodimer forming a stable octameric structure. CD3D-CD3E and CD3G-CD3E heterodimers preferentially associate with TR alpha and TR beta chains, respectively. The association of the CD247 homodimer is the last step of TcR assembly in the endoplasmic reticulum and is required for transport to the cell surface.

It localises to the cell membrane. Functionally, v region of the variable domain of T cell receptor (TR) alpha chain that participates in the antigen recognition. Alpha-beta T cell receptors are antigen specific receptors which are essential to the immune response and are present on the cell surface of T lymphocytes. Recognize peptide-major histocompatibility (MH) (pMH) complexes that are displayed by antigen presenting cells (APC), a prerequisite for efficient T cell adaptive immunity against pathogens. Binding of alpha-beta TR to pMH complex initiates TR-CD3 clustering on the cell surface and intracellular activation of LCK that phosphorylates the ITAM motifs of CD3G, CD3D, CD3E and CD247 enabling the recruitment of ZAP70. In turn ZAP70 phosphorylates LAT, which recruits numerous signaling molecules to form the LAT signalosome. The LAT signalosome propagates signal branching to three major signaling pathways, the calcium, the mitogen-activated protein kinase (MAPK) kinase and the nuclear factor NF-kappa-B (NF-kB) pathways, leading to the mobilization of transcription factors that are critical for gene expression and essential for T cell growth and differentiation. The T cell repertoire is generated in the thymus, by V-(D)-J rearrangement. This repertoire is then shaped by intrathymic selection events to generate a peripheral T cell pool of self-MH restricted, non-autoaggressive T cells. Post-thymic interaction of alpha-beta TR with the pMH complexes shapes TR structural and functional avidity. The sequence is that of T cell receptor alpha variable 38-2/delta variable 8 from Homo sapiens (Human).